Reading from the N-terminus, the 788-residue chain is E3 ubiquitin-protein ligase SspH2 (788 aa).

The interval 1–481 (MPFHIGSGCL…PGYSGPIIRF (481 aa)) is interaction with host membrane and with target proteins. 12 LRR repeats span residues 223 to 242 (HITTLVIPDNNLTSLPALPP), 243 to 264 (ELRTLEVSGNQLTSLPVLPPGL), 265 to 282 (LELSIFSNPLTHLPALPS), 283 to 302 (GLCKLWIFGNQLTSLPVLPP), 303 to 324 (GLQELSVSDNQLASLPALPSEL), 325 to 342 (CKLWAYNNQLTSLPMLPS), 343 to 364 (GLQELSVSDNQLASLPTLPSEL), 365 to 382 (YKLWAYNNRLTSLPALPS), 383 to 404 (GLKELIVSGNRLTSLPVLPSEL), 405 to 422 (KELMVSGNRLTSLPMLPS), 423 to 445 (GLLSLSVYRNQLTRLPESLIHLS), and 446 to 466 (SETTVNLEGNPLSERTLQALR). Residues 482 to 491 (DMAGASAPRE) form a linker region. Residues 492-788 (TRALHLAAAD…SYLNVQWRRN (297 aa)) are E3 ubiquitin-protein ligase catalytic domain. The region spanning 494-788 (ALHLAAADWL…SYLNVQWRRN (295 aa)) is the NEL domain. Cys-580 functions as the Glycyl thioester intermediate in the catalytic mechanism.

This sequence belongs to the LRR-containing bacterial E3 ligase family. In terms of processing, ubiquitinated in the presence of host E1 ubiquitin-activating enzyme UBA1, E2 ubiquitin-conjugating enzyme UBE2D2 and ubiquitin.

The protein localises to the secreted. Its subcellular location is the host cytoplasm. It is found in the host apical cell membrane. The catalysed reaction is S-ubiquitinyl-[E2 ubiquitin-conjugating enzyme]-L-cysteine + [acceptor protein]-L-lysine = [E2 ubiquitin-conjugating enzyme]-L-cysteine + N(6)-ubiquitinyl-[acceptor protein]-L-lysine.. With respect to regulation, exists in an autoinhibited state in the absence of substrate protein, due to interactions of the leucine-rich repeat domain with the catalytic domain. Is activated upon binding to a substrate protein. Its function is as follows. Effector proteins function to alter host cell physiology and promote bacterial survival in host tissues. This protein is an E3 ubiquitin ligase that interferes with host's ubiquitination pathway. This Salmonella typhimurium (strain LT2 / SGSC1412 / ATCC 700720) protein is E3 ubiquitin-protein ligase SspH2 (sspH2).